A 92-amino-acid chain; its full sequence is Large ribosomal subunit protein eL37 (92 aa).

Zn(2+)-binding residues include Cys-19, Cys-22, Cys-34, and Cys-37. The C4-type zinc finger occupies 19 to 37; the sequence is CRRCGRRSYHIQKSTCANC. Residues 50-92 are disordered; that stretch reads SEKAKRRKTTGSGRTAHLRDVHRRFKNGFQVGTPKGARGPENH.

Belongs to the eukaryotic ribosomal protein eL37 family. The cofactor is Zn(2+).

In terms of biological role, binds to the 23S rRNA. This is Large ribosomal subunit protein eL37 (rpl37) from Emericella nidulans (strain FGSC A4 / ATCC 38163 / CBS 112.46 / NRRL 194 / M139) (Aspergillus nidulans).